The primary structure comprises 792 residues: Phosphoenolpyruvate synthase (792 aa).

Catalysis depends on H421, which acts as the Tele-phosphohistidine intermediate. Positions 511, 578, 680, 701, 702, 703, and 704 each coordinate substrate. Residue E680 participates in Mg(2+) binding. D704 is a Mg(2+) binding site. C751 acts as the Proton donor in catalysis.

This sequence belongs to the PEP-utilizing enzyme family. As to quaternary structure, homodimer. The cofactor is Mg(2+).

The enzyme catalyses pyruvate + ATP + H2O = phosphoenolpyruvate + AMP + phosphate + 2 H(+). Its pathway is carbohydrate biosynthesis; gluconeogenesis. Its activity is regulated as follows. Activated by a Pi-dependent pyrophosphorylation and inactivated by an ADP-dependent phosphorylation on a regulatory threonine. Both reactions are mediated by the bifunctional serine/threonine kinase and phosphorylase PpsR. Its function is as follows. Catalyzes the phosphorylation of pyruvate to phosphoenolpyruvate. The sequence is that of Phosphoenolpyruvate synthase (ppsA) from Escherichia coli (strain K12).